Reading from the N-terminus, the 455-residue chain is Ribulose bisphosphate carboxylase large chain (455 aa).

Lys-5 is modified (N6,N6,N6-trimethyllysine). Asn-114 and Thr-164 together coordinate substrate. The active-site Proton acceptor is Lys-166. Lys-168 lines the substrate pocket. The Mg(2+) site is built by Lys-192, Asp-194, and Glu-195. Position 192 is an N6-carboxylysine (Lys-192). His-285 functions as the Proton acceptor in the catalytic mechanism. Substrate contacts are provided by Arg-286, His-318, and Ser-370.

It belongs to the RuBisCO large chain family. Type I subfamily. As to quaternary structure, heterohexadecamer of 8 large chains and 8 small chains; disulfide-linked. The disulfide link is formed within the large subunit homodimers. It depends on Mg(2+) as a cofactor. In terms of processing, the disulfide bond which can form in the large chain dimeric partners within the hexadecamer appears to be associated with oxidative stress and protein turnover.

It is found in the plastid. Its subcellular location is the chloroplast. It catalyses the reaction 2 (2R)-3-phosphoglycerate + 2 H(+) = D-ribulose 1,5-bisphosphate + CO2 + H2O. It carries out the reaction D-ribulose 1,5-bisphosphate + O2 = 2-phosphoglycolate + (2R)-3-phosphoglycerate + 2 H(+). Functionally, ruBisCO catalyzes two reactions: the carboxylation of D-ribulose 1,5-bisphosphate, the primary event in carbon dioxide fixation, as well as the oxidative fragmentation of the pentose substrate in the photorespiration process. Both reactions occur simultaneously and in competition at the same active site. This is Ribulose bisphosphate carboxylase large chain from Senna didymobotrya (Popcorn cassia).